Consider the following 273-residue polypeptide: DNA repair protein RecO (273 aa).

Residues 249–273 (GRSLTEEPELKAEQTEAEKESQRPR) form a disordered region. Residues 252–273 (LTEEPELKAEQTEAEKESQRPR) show a composition bias toward basic and acidic residues.

Belongs to the RecO family.

Involved in DNA repair and RecF pathway recombination. In Heliobacterium modesticaldum (strain ATCC 51547 / Ice1), this protein is DNA repair protein RecO.